Here is a 307-residue protein sequence, read N- to C-terminus: Putative F-box protein PP2-B6 (307 aa).

The F-box domain maps to 42 to 88 (HSPFDDLPEDCISNIISFTSPRDVCVSASVSKSFAHAVQCDSIWEKF).

This is Putative F-box protein PP2-B6 (PP2B6) from Arabidopsis thaliana (Mouse-ear cress).